Consider the following 279-residue polypeptide: Pleckstrin homology domain-containing family F member 1 (279 aa).

The 97-residue stretch at valine 35–arginine 131 folds into the PH domain. The segment at aspartate 152–alanine 212 adopts an FYVE-type zinc-finger fold. Zn(2+) contacts are provided by cysteine 158, cysteine 161, cysteine 175, cysteine 178, cysteine 183, cysteine 186, cysteine 204, and cysteine 207. The segment at glutamate 219–glutamine 264 is disordered. Residues glycine 244–arginine 253 are compositionally biased toward acidic residues.

It localises to the nucleus. The protein resides in the cytoplasm. It is found in the perinuclear region. The protein localises to the lysosome. May induce apoptosis through the lysosomal-mitochondrial pathway. Translocates to the lysosome initiating the permeabilization of lysosomal membrane (LMP) and resulting in the release of CTSD and CTSL to the cytoplasm. Triggers the caspase-independent apoptosis by altering mitochondrial membrane permeabilization (MMP) resulting in the release of PDCD8. In Rattus norvegicus (Rat), this protein is Pleckstrin homology domain-containing family F member 1 (Plekhf1).